We begin with the raw amino-acid sequence, 266 residues long: MAPSKWDDEEESTSPPPVAYRRKFDDEEEEDVLDSWDAAEDSEVEREKAAKAAEAKAKAEAEAAAKKKSKAQRIQEHKEERKKREEEDSSSESEEDEAERRARLRRTEKDSDLKHAEDLFGDIDLNRTRNRGAPKAVVVSDSADPTQAVDLSAMPLFKPTTKDQFTRLTTTLAPLLTAHSKKPQYALWAQEFTKQLVKELNSGDVKKIASALTTMSNEKMREERAADKGNKKSKAAKTKVSLVTSRENKIDASYDDDDGLDDDDFM.

2 disordered regions span residues M1–S142 and M215–V243. The segment covering D26–V44 has biased composition (acidic residues). Residues E40 to E99 are a coiled coil. Basic and acidic residues-rich tracts occupy residues E45–A65 and R73–E86. Over residues E87–E97 the composition is skewed to acidic residues. 2 stretches are compositionally biased toward basic and acidic residues: residues A98–D118 and E218–N230.

This sequence belongs to the eIF-3 subunit J family. In terms of assembly, component of the eukaryotic translation initiation factor 3 (eIF-3) complex.

The protein resides in the cytoplasm. Component of the eukaryotic translation initiation factor 3 (eIF-3) complex, which is involved in protein synthesis of a specialized repertoire of mRNAs and, together with other initiation factors, stimulates binding of mRNA and methionyl-tRNAi to the 40S ribosome. The eIF-3 complex specifically targets and initiates translation of a subset of mRNAs involved in cell proliferation. This Aspergillus terreus (strain NIH 2624 / FGSC A1156) protein is Eukaryotic translation initiation factor 3 subunit J (hcr1).